The primary structure comprises 440 residues: ATP-dependent protease ATPase subunit HslU (440 aa).

ATP-binding positions include Val18, 60–65 (GVGKTE), Asp254, Glu319, and Arg391.

The protein belongs to the ClpX chaperone family. HslU subfamily. In terms of assembly, a double ring-shaped homohexamer of HslV is capped on each side by a ring-shaped HslU homohexamer. The assembly of the HslU/HslV complex is dependent on binding of ATP.

The protein resides in the cytoplasm. In terms of biological role, ATPase subunit of a proteasome-like degradation complex; this subunit has chaperone activity. The binding of ATP and its subsequent hydrolysis by HslU are essential for unfolding of protein substrates subsequently hydrolyzed by HslV. HslU recognizes the N-terminal part of its protein substrates and unfolds these before they are guided to HslV for hydrolysis. The chain is ATP-dependent protease ATPase subunit HslU from Cellvibrio japonicus (strain Ueda107) (Pseudomonas fluorescens subsp. cellulosa).